A 561-amino-acid polypeptide reads, in one-letter code: TBC1 domain family member 24 (561 aa).

A 1,2-diacyl-sn-glycero-3-phospho-(1D-myo-inositol) contacts are provided by lysine 36 and arginine 40. The 192-residue stretch at 45–236 (AQSHTLRGKV…RVFDVFLVEG (192 aa)) folds into the Rab-GAP TBC domain. A 1,2-diacyl-sn-glycero-3-phospho-(1D-myo-inositol)-binding positions include lysine 238, arginine 242, and 293–297 (RLFSR). The region spanning 343–556 (EIVSVKEMRD…IAAVEAWGFQ (214 aa)) is the TLDc domain. A phosphoserine mark is found at serine 475 and serine 482.

Interacts with ARF6. As to expression, expressed in brain, particularly at the level of the cortex and the hippocampus. Expressed in the inner ear in spiral ganglion cells, a collection of neurons critical for hearing and balance.

The protein resides in the cell membrane. It is found in the cytoplasm. It localises to the cytoplasmic vesicle membrane. The protein localises to the presynapse. May act as a GTPase-activating protein for Rab family protein(s). Involved in neuronal projections development, probably through a negative modulation of ARF6 function. Involved in the regulation of synaptic vesicle trafficking. In Mus musculus (Mouse), this protein is TBC1 domain family member 24 (Tbc1d24).